Consider the following 437-residue polypeptide: MTVFHFTGIKGSGMSPLAQILFDAGEQVQGSDVDKYFFTEQPLRERNIPIFTFNADNIKEGMTVIAGNAFPDDHPELIRAREIGVEIIRYHKFLGEYIGNYISIAITGAHGKTSTTGLMAHVVGGYKPTSYLIGDGTGAGHANADFFVMEACEYRRHFLAYNPDYAVMTNIDFDHPDYFANIEDVYSAFQSLALQVKKAIIACGDDEQLQRIQAKVPVVYYGFGSENDFEARNVEKTTEGTKFDVFVRNEFYSTFFIPLFGDHAILNTLAVITLCEYEGISPDIIQDRLHTYKGVKRRFTETDIGDNVLIDDYAHHPTEIRATIQSARQKFPDRELVAIFQPHTFTRTQAFLQDFADSLSLADTAYLCDIFGSARETQGALSIQDLASLIEGSAVITTEGIDILTKHQGAVFLFMGAGDVHKFQDAFEAVLKNDETA.

Position 108 to 114 (108 to 114) interacts with ATP; the sequence is GAHGKTS.

This sequence belongs to the MurCDEF family.

It is found in the cytoplasm. It carries out the reaction UDP-N-acetyl-alpha-D-muramate + L-alanine + ATP = UDP-N-acetyl-alpha-D-muramoyl-L-alanine + ADP + phosphate + H(+). The protein operates within cell wall biogenesis; peptidoglycan biosynthesis. Functionally, cell wall formation. This is UDP-N-acetylmuramate--L-alanine ligase from Lysinibacillus sphaericus (strain C3-41).